A 105-amino-acid polypeptide reads, in one-letter code: Type VII secretion system extracellular protein D (105 aa).

In terms of assembly, forms heterodimers with EsxB.

It localises to the secreted. This chain is Type VII secretion system extracellular protein D, found in Staphylococcus aureus (strain USA300).